We begin with the raw amino-acid sequence, 177 residues long: Large ribosomal subunit protein uL6 (177 aa).

The protein belongs to the universal ribosomal protein uL6 family. As to quaternary structure, part of the 50S ribosomal subunit.

In terms of biological role, this protein binds to the 23S rRNA, and is important in its secondary structure. It is located near the subunit interface in the base of the L7/L12 stalk, and near the tRNA binding site of the peptidyltransferase center. This Psychromonas ingrahamii (strain DSM 17664 / CCUG 51855 / 37) protein is Large ribosomal subunit protein uL6.